A 340-amino-acid chain; its full sequence is MTTDAVQTMIPTLDVTERPAPRPKVEAGVKLRGAEKVARIPVKIIPTTELPKKPDWIRVRIPVSPEVDRIKSLLRKHKLHSVCEEASCPNLGECFSGGTATFMIMGDICTRRCPFCDVGHGRPKPLDVNEPESLAIAIADLKLKYVVITSVDRDDLRDGGAQHFADCIREIRKLSPNVQLETLVPDYRGRMDIALEITAAEPPDVFNHNLETVPRLYKAARPGSDYQWSLTLLQRFKQMMPHIPTKSGLMLGLGETDDEVIEVMKRMREHDIDMLTLGQYLQPSRSHLPVQRFVHPDTFAWFAEEGYKMGFKNVASGPLVRSSYHADEQAKLVKAELLGS.

The [4Fe-4S] cluster site is built by Cys-83, Cys-88, Cys-94, Cys-109, Cys-113, Cys-116, and Ser-323. A Radical SAM core domain is found at 95–312 (FSGGTATFMI…AEEGYKMGFK (218 aa)).

The protein belongs to the radical SAM superfamily. Lipoyl synthase family. [4Fe-4S] cluster serves as cofactor.

The protein localises to the cytoplasm. The catalysed reaction is [[Fe-S] cluster scaffold protein carrying a second [4Fe-4S](2+) cluster] + N(6)-octanoyl-L-lysyl-[protein] + 2 oxidized [2Fe-2S]-[ferredoxin] + 2 S-adenosyl-L-methionine + 4 H(+) = [[Fe-S] cluster scaffold protein] + N(6)-[(R)-dihydrolipoyl]-L-lysyl-[protein] + 4 Fe(3+) + 2 hydrogen sulfide + 2 5'-deoxyadenosine + 2 L-methionine + 2 reduced [2Fe-2S]-[ferredoxin]. The protein operates within protein modification; protein lipoylation via endogenous pathway; protein N(6)-(lipoyl)lysine from octanoyl-[acyl-carrier-protein]: step 2/2. Functionally, catalyzes the radical-mediated insertion of two sulfur atoms into the C-6 and C-8 positions of the octanoyl moiety bound to the lipoyl domains of lipoate-dependent enzymes, thereby converting the octanoylated domains into lipoylated derivatives. The sequence is that of Lipoyl synthase from Pseudomonas fluorescens (strain Pf0-1).